A 648-amino-acid chain; its full sequence is Macrolide export ATP-binding/permease protein MacB (648 aa).

Residues 1-272 (MTPLLELKDI…RALAANKMRT (272 aa)) are Cytoplasmic-facing. The ABC transporter domain maps to 5-243 (LELKDIRRSY…TGGTEPVVNT (239 aa)). Residue 41–48 (GASGSGKS) participates in ATP binding. The helical transmembrane segment at 273–293 (LLTMLGIIIGIASVVSIVVVG) threads the bilayer. Residues 294 to 522 (DAAKQMVLAD…TVEKTTRTLQ (229 aa)) lie on the Periplasmic side of the membrane. The chain crosses the membrane as a helical span at residues 523–543 (LFLTLVAVISLVVGGIGVMNI). Residues 544–575 (MLVSVTERTREIGIRMAVGARASDVLQQFLIE) are Cytoplasmic-facing. A helical transmembrane segment spans residues 576–596 (AVLVCLVGGALGITLSLLIAF). The Periplasmic segment spans residues 597 to 610 (TLQLFLPGWEIGFS). Residues 611-631 (PLALLLAFLCSTVTGILFGWL) traverse the membrane as a helical segment. The Cytoplasmic portion of the chain corresponds to 632 to 648 (PARNAARLDPVDALARE).

It belongs to the ABC transporter superfamily. Macrolide exporter (TC 3.A.1.122) family. Homodimer. Part of the tripartite efflux system MacAB-TolC, which is composed of an inner membrane transporter, MacB, a periplasmic membrane fusion protein, MacA, and an outer membrane component, TolC. The complex forms a large protein conduit and can translocate molecules across both the inner and outer membranes. Interacts with MacA.

It is found in the cell inner membrane. With respect to regulation, ATPase activity is stimulated by interaction with MacA and inhibited by vanadate. Its function is as follows. Part of the tripartite efflux system MacAB-TolC. MacB is a non-canonical ABC transporter that contains transmembrane domains (TMD), which form a pore in the inner membrane, and an ATP-binding domain (NBD), which is responsible for energy generation. When overexpressed, the system confers resistance against macrolides composed of 14- and 15-membered lactones but no or weak resistance against 16-membered ones. In addition, the system could also transport R-LPS or a similar glycolipid. The chain is Macrolide export ATP-binding/permease protein MacB from Escherichia coli (strain K12).